The primary structure comprises 1486 residues: Collagen alpha-1(II) chain (1486 aa).

A signal peptide spans 1-26 (MFSFVDSRTLVLFAATQVILLAVVRC). A propeptide spans 27-183 (QDEEDVLDTG…PPGLGGNFAA (157 aa)) (N-terminal propeptide). One can recognise a VWFC domain in the interval 36–94 (GSCVQHGQRYSDKDVWKPEPCQICVCDTGTVLCDDIICEESKDCPNAEIPFGECCPICP). Residues 100 to 1241 (TSSGQGVLKG…EKGPDPMRYM (1142 aa)) form a disordered region. Basic and acidic residues-rich tracts occupy residues 110–121 (QKGEPGDIKDVL) and 138–159 (SRGERGDKGEKGAPGPRGRDGE). Residues 163 to 175 (PGNPGPVGPPGPP) are compositionally biased toward pro residues. Residues 194–205 (GGAQMGVMQGPM) show a composition bias toward low complexity. Residues 203-1216 (GPMGPMGPRG…PGPPGPPGPP (1014 aa)) are triple-helical region. Pro residues predominate over residues 210–219 (PRGPPGPTGA). Low complexity predominate over residues 220–231 (PGPQGFQGNPGE). Residues 233–242 (GEPGAGGPMG) are compositionally biased toward gly residues. The segment covering 253 to 267 (PGDDGEAGKPGKSGE) has biased composition (basic and acidic residues). Over residues 308 to 317 (GAKGEGGATG) the composition is skewed to gly residues. Composition is skewed to low complexity over residues 318–330 (EAGSPGPMGPRGL), 337–346 (PGSSGAAGAR), 363–373 (PAGAPGFPGAP), and 393–421 (PRGESGTPGSPGPAGASGNPGTDGIPGAK). The segment covering 422 to 431 (GSSGGPGIAG) has biased composition (gly residues). Residues 435-444 (FPGPRGPPGP) are compositionally biased toward pro residues. Low complexity-rich tracts occupy residues 478–487 (AGPQGAPGPA) and 498–517 (EPGAAGPNGPPGERGAPGNR). Residues 536–551 (GVPGLGGPKGGNGDPG) are compositionally biased toward gly residues. A 4-hydroxyproline mark is found at Pro661 and Pro670. Pro672 is subject to 3-hydroxyproline. 4-hydroxyproline occurs at positions 673 and 676. Low complexity predominate over residues 708–732 (ERGSSGPQGLQGPRGLPGTPGTDGP). Positions 766 to 777 (KGDRGDTGEKGP) are enriched in basic and acidic residues. The span at 891–904 (AQGPAGATGFPGAA) shows a compositional bias: low complexity. 4-hydroxyproline is present on residues Pro910, Pro916, and Pro922. Residues 913–922 (NGNPGPPGPP) show a composition bias toward pro residues. A compositionally biased stretch (low complexity) spans 936-955 (DAGPPGRAGDPGLQGAAGAP). Residues 1007–1016 (GKQGGPGSSG) show a composition bias toward gly residues. Low complexity predominate over residues 1102–1116 (SGPAGARGLAGPQGP). Positions 1117–1131 (RGDKGEAGEAGERGQ) are enriched in basic and acidic residues. The residue at position 1146 (Pro1146) is a 3-hydroxyproline. Positions 1150–1159 (AGDQGATGPA) are enriched in low complexity. Pro1188 is modified (3-hydroxyproline). Pro1189 carries the post-translational modification 4-hydroxyproline. Over residues 1201-1218 (SGPPGQPGPPGPPGPPGP) the composition is skewed to pro residues. Residue Pro1203 is modified to 3-hydroxyproline. A 4-hydroxyproline mark is found at Pro1204 and Pro1207. A 3-hydroxyproline modification is found at Pro1209. 4-hydroxyproline is present on residues Pro1210 and Pro1213. Pro1215 carries the 3-hydroxyproline modification. A 4-hydroxyproline modification is found at Pro1216. The segment at 1217-1243 (GPGIDMSAFAGLSQPEKGPDPMRYMRA) is nonhelical region (C-terminal). Positions 1244 to 1486 (DQASNSLPVD…GVDIGPVCFL (243 aa)) are cleaved as a propeptide — C-terminal propeptide. Positions 1252-1486 (VDVEATLKSL…GVDIGPVCFL (235 aa)) constitute a Fibrillar collagen NC1 domain. 3 cysteine pairs are disulfide-bonded: Cys1282–Cys1314, Cys1322–Cys1484, and Cys1392–Cys1437. Asp1300, Asn1302, Gln1303, Cys1305, and Asp1308 together coordinate Ca(2+). The N-linked (GlcNAc...) asparagine glycan is linked to Asn1387.

It belongs to the fibrillar collagen family. As to quaternary structure, homotrimers of alpha 1(II) chains. In terms of processing, contains mostly 4-hydroxyproline. Prolines at the third position of the tripeptide repeating unit (G-X-P) are 4-hydroxylated in some or all of the chains. Contains 3-hydroxyproline at a few sites. This modification occurs on the first proline residue in the sequence motif Gly-Pro-Hyp, where Hyp is 4-hydroxyproline. Post-translationally, lysine residues at the third position of the tripeptide repeating unit (G-X-Y) are 5-hydroxylated in some or all of the chains. In terms of processing, O-glycosylated on hydroxylated lysine residues. The O-linked glycan consists of a Glc-Gal disaccharide.

It localises to the secreted. It is found in the extracellular space. The protein resides in the extracellular matrix. Functionally, type II collagen is specific for cartilaginous tissues. It is essential for the normal embryonic development of the skeleton, for linear growth and for the ability of cartilage to resist compressive forces. This is Collagen alpha-1(II) chain from Xenopus laevis (African clawed frog).